We begin with the raw amino-acid sequence, 152 residues long: UPF0266 membrane protein PM0830 (152 aa).

A run of 3 helical transmembrane segments spans residues 1–21, 45–65, and 66–86; these read MMII…YAFY, KDAL…YTNL, and SSAT…AAFI.

It belongs to the UPF0266 family.

The protein localises to the cell inner membrane. The protein is UPF0266 membrane protein PM0830 of Pasteurella multocida (strain Pm70).